A 254-amino-acid chain; its full sequence is NAD kinase (254 aa).

Aspartate 44 (proton acceptor) is an active-site residue. Residues aspartate 44–glycine 45, asparagine 114–glutamate 115, aspartate 144, alanine 152, threonine 155–serine 160, and alanine 179 contribute to the NAD(+) site.

It belongs to the NAD kinase family. The cofactor is a divalent metal cation.

It localises to the cytoplasm. The catalysed reaction is NAD(+) + ATP = ADP + NADP(+) + H(+). Involved in the regulation of the intracellular balance of NAD and NADP, and is a key enzyme in the biosynthesis of NADP. Catalyzes specifically the phosphorylation on 2'-hydroxyl of the adenosine moiety of NAD to yield NADP. This chain is NAD kinase, found in Cereibacter sphaeroides (strain ATCC 17023 / DSM 158 / JCM 6121 / CCUG 31486 / LMG 2827 / NBRC 12203 / NCIMB 8253 / ATH 2.4.1.) (Rhodobacter sphaeroides).